Reading from the N-terminus, the 237-residue chain is Phosphoribosylaminoimidazole-succinocarboxamide synthase (237 aa).

Belongs to the SAICAR synthetase family.

The catalysed reaction is 5-amino-1-(5-phospho-D-ribosyl)imidazole-4-carboxylate + L-aspartate + ATP = (2S)-2-[5-amino-1-(5-phospho-beta-D-ribosyl)imidazole-4-carboxamido]succinate + ADP + phosphate + 2 H(+). The protein operates within purine metabolism; IMP biosynthesis via de novo pathway; 5-amino-1-(5-phospho-D-ribosyl)imidazole-4-carboxamide from 5-amino-1-(5-phospho-D-ribosyl)imidazole-4-carboxylate: step 1/2. The sequence is that of Phosphoribosylaminoimidazole-succinocarboxamide synthase from Citrobacter koseri (strain ATCC BAA-895 / CDC 4225-83 / SGSC4696).